The sequence spans 274 residues: Putative pyruvate, phosphate dikinase regulatory protein (274 aa).

153–160 is an ADP binding site; sequence GISRTSKT.

It belongs to the pyruvate, phosphate/water dikinase regulatory protein family. PDRP subfamily.

It carries out the reaction N(tele)-phospho-L-histidyl/L-threonyl-[pyruvate, phosphate dikinase] + ADP = N(tele)-phospho-L-histidyl/O-phospho-L-threonyl-[pyruvate, phosphate dikinase] + AMP + H(+). The enzyme catalyses N(tele)-phospho-L-histidyl/O-phospho-L-threonyl-[pyruvate, phosphate dikinase] + phosphate + H(+) = N(tele)-phospho-L-histidyl/L-threonyl-[pyruvate, phosphate dikinase] + diphosphate. Bifunctional serine/threonine kinase and phosphorylase involved in the regulation of the pyruvate, phosphate dikinase (PPDK) by catalyzing its phosphorylation/dephosphorylation. This is Putative pyruvate, phosphate dikinase regulatory protein from Bartonella henselae (strain ATCC 49882 / DSM 28221 / CCUG 30454 / Houston 1) (Rochalimaea henselae).